Reading from the N-terminus, the 360-residue chain is MKASLLKKLDVLSDRYEELTALLGDAEVISDQTRFRAYSREYAEVEPVILAFRDYRKVQADLEGAQALLKDSDPELRDLAEEEVAEARGRLAALGDSLQRMLLPKDPNDSRNVFLEIRAGTGGDEAAIFSGDLFRMYSRYAERQGWRIETLSENEGEHGGYKEVIARVEGDNVYAKLKFESGAHRVQRVPETESQGRIHTSACTVAVLPEPDEQAAIEINPADLRVDTYRSSGAGGQHVNKTDSAVRITHIPSGIVVECQEERSQHKNRAKAMAWLAAKLNDQQQAAAQQAIASTRKLLVGSGDRSERIRTYNFPQGRVTDHRINLTLYSLGEVMEGAVEQVIEPLLQEYQADQLAALGD.

Q237 carries the post-translational modification N5-methylglutamine.

It belongs to the prokaryotic/mitochondrial release factor family. Methylated by PrmC. Methylation increases the termination efficiency of RF1.

Its subcellular location is the cytoplasm. Peptide chain release factor 1 directs the termination of translation in response to the peptide chain termination codons UAG and UAA. The chain is Peptide chain release factor 1 (prfA) from Pseudomonas aeruginosa (strain ATCC 15692 / DSM 22644 / CIP 104116 / JCM 14847 / LMG 12228 / 1C / PRS 101 / PAO1).